The following is a 483-amino-acid chain: NADPH:adrenodoxin oxidoreductase, mitochondrial (483 aa).

The transit peptide at Met1–Phe14 directs the protein to the mitochondrion. Residues Ala32, Asp53, Leu61, and Leu97 each contribute to the FAD site. Residues Gln169 to Val172, Arg213 to Arg214, and Glu225 each bind NADP(+). Residues Trp391 and Gly398 to Ile400 each bind FAD. NADP(+) is bound at residue Gly398.

This sequence belongs to the ferredoxin--NADP reductase type 1 family. FAD serves as cofactor.

The protein resides in the mitochondrion. It catalyses the reaction 2 reduced [adrenodoxin] + NADP(+) + H(+) = 2 oxidized [adrenodoxin] + NADPH. In terms of biological role, associates in vitro with the adrenodoxin-like protein MFDX1 to form an efficient low potential electron transfer chain that is able to reduce cytochrome C. Functions as accessory mitochondrial protein involved with BIO2 in the plant biotin synthase reaction. This is NADPH:adrenodoxin oxidoreductase, mitochondrial from Arabidopsis thaliana (Mouse-ear cress).